The following is a 326-amino-acid chain: ELAV-like protein 1 (326 aa).

RRM domains lie at 20 to 98 (TNLI…VARP), 106 to 186 (ANLY…FAAN), and 244 to 322 (WCIF…FKTS).

The protein belongs to the RRM elav family. As to quaternary structure, interacts (via RRM3) with cirbp. Unable to form oligomers. Part of a ribonucleoprotein (RNP) complex, at least composed of elavl1/elrA and/or elavl2/elrB, igf2bp3/vg1RBP, ddx6/Xp54, ybx2/frgy2, lsm14b/rap55b and, in a subset of RNP complexes, stau1/staufen.

The protein resides in the cytoplasm. It localises to the cell cortex. In terms of biological role, RNA-binding protein that binds to the 3'-UTR region of mRNAs and increases their stability. Involved in embryonic stem cells (ESCs) differentiation: preferentially binds mRNAs that are not methylated by N6-methyladenosine (m6A), stabilizing them, promoting ESCs differentiation. Binds to poly-U elements and AU-rich elements (AREs) in the 3'-UTR of target mRNAs. Acts cooperatively with cribp to stabilize AU-rich sequence (ARE)-containing mRNAs. May play a role during gastrulation. Required for the vegetal localization of vg1 mRNA. The chain is ELAV-like protein 1 from Xenopus tropicalis (Western clawed frog).